Here is a 471-residue protein sequence, read N- to C-terminus: MATYALSQAHREQMEKSLVDSDPEIAQIMEKEIQRQRESILLIASENVTSRAVFDALGSPMSNKYSEGYPGARYYGGNQHIDAIELTCQARALKAFNLDPEKWGVNVQCLSGSPANLEVYQALMRPHDRLMGLDLPHGGHLSHGYQTPSRKISAVSTYFETFPYRVNTETGIIDYDTLEANAELYRPKCLVAGTSAYCRLIDYGRMRKIADKVGAYLIVDMAHISGLVAAGVIPSPFEYADVVTTTTHKSLRGPRGAMIFFRKGVRSTDPKTGKEIMYDLEGPINFSVFPGHQGGPHNHTITALAVALKQAATPEFRQYQEQVLKNAKALEVEFKALGHKLVSDGTDSHMVLLDLRPKGLDGARVEAVLEQINIACNKNSIPGDKSALTPCGIRIGTPAMTSRGMSEEDFKRVARYIDQVINLCKSIQADLPKEANKLKDFKAKVASGSVPEILALRKEVAEWASTYPLPV.

K249 carries the N6-(pyridoxal phosphate)lysine modification.

This sequence belongs to the SHMT family. Requires pyridoxal 5'-phosphate as cofactor.

Its subcellular location is the cytoplasm. It localises to the cytosol. It carries out the reaction (6R)-5,10-methylene-5,6,7,8-tetrahydrofolate + glycine + H2O = (6S)-5,6,7,8-tetrahydrofolate + L-serine. It functions in the pathway one-carbon metabolism; tetrahydrofolate interconversion. In terms of biological role, catalyzes the interconversion of serine and glycine. Essential for viability and required for virulence in a murine model of established pulmonary infection. The chain is Serine hydroxymethyltransferase, cytosolic from Aspergillus fumigatus (strain ATCC MYA-4609 / CBS 101355 / FGSC A1100 / Af293) (Neosartorya fumigata).